Reading from the N-terminus, the 614-residue chain is Signal recognition particle receptor subunit alpha homolog (614 aa).

The disordered stretch occupies residues 119-244 (EASAKQVKAP…DRSRDSPDDV (126 aa)). The segment covering 149 to 160 (QDDKKPVEKRVN) has biased composition (basic and acidic residues). A compositionally biased stretch (pro residues) spans 164–178 (APPPSKSQPSSPPTG). A compositionally biased stretch (basic and acidic residues) spans 232 to 241 (ALLDRSRDSP). 2 positions are modified to phosphoserine: Ser-237 and Ser-240. Position 246 is a phosphotyrosine (Tyr-246). Phosphoserine is present on residues Ser-268, Ser-278, and Ser-279. Residues 268 to 285 (SEDEADNEDASSEGEAEE) show a composition bias toward acidic residues. Positions 268–290 (SEDEADNEDASSEGEAEEQVQSK) are disordered. The segment at 396 to 613 (YTIIFCGVNG…NVNAVVNSLM (218 aa)) is NG domain. Residues 402–409 (GVNGVGKS), 497–501 (DTAGR), and 565–568 (TKFD) contribute to the GTP site.

The protein belongs to the GTP-binding SRP family. As to quaternary structure, heterodimer of SrpRalpha and SrpRbeta. In 8-9 hours embryos, expression is seen in a segmental pattern along embryonic ventral midline.

The protein resides in the endoplasmic reticulum membrane. Component of the SRP (signal recognition particle) receptor. Ensures, in conjunction with the signal recognition particle, the correct targeting of the nascent secretory proteins to the endoplasmic reticulum membrane system. Forms a guanosine 5'-triphosphate (GTP)-dependent complex with the SRP subunit Srp54. SRP receptor compaction and GTPase rearrangement drive SRP-mediated cotranslational protein translocation into the ER. May have a role in axonogenesis. The chain is Signal recognition particle receptor subunit alpha homolog from Drosophila melanogaster (Fruit fly).